Reading from the N-terminus, the 206-residue chain is Urease accessory protein UreG (206 aa).

Residue 11–18 (GPVGAGKT) coordinates GTP.

This sequence belongs to the SIMIBI class G3E GTPase family. UreG subfamily. In terms of assembly, homodimer. UreD, UreF and UreG form a complex that acts as a GTP-hydrolysis-dependent molecular chaperone, activating the urease apoprotein by helping to assemble the nickel containing metallocenter of UreC. The UreE protein probably delivers the nickel.

Its subcellular location is the cytoplasm. In terms of biological role, facilitates the functional incorporation of the urease nickel metallocenter. This process requires GTP hydrolysis, probably effectuated by UreG. This Ureaplasma parvum serovar 3 (strain ATCC 700970) protein is Urease accessory protein UreG.